Here is a 175-residue protein sequence, read N- to C-terminus: Protein FAM89A (175 aa).

The interval F141 to I175 is disordered. Residues R157–D169 show a composition bias toward polar residues.

It belongs to the FAM89 family.

The sequence is that of Protein FAM89A (Fam89a) from Mus musculus (Mouse).